Reading from the N-terminus, the 407-residue chain is Phosphopentomutase (407 aa).

Positions 10, 306, 311, 347, 348, and 359 each coordinate Mn(2+).

This sequence belongs to the phosphopentomutase family. Mn(2+) is required as a cofactor.

It localises to the cytoplasm. The enzyme catalyses 2-deoxy-alpha-D-ribose 1-phosphate = 2-deoxy-D-ribose 5-phosphate. It carries out the reaction alpha-D-ribose 1-phosphate = D-ribose 5-phosphate. It participates in carbohydrate degradation; 2-deoxy-D-ribose 1-phosphate degradation; D-glyceraldehyde 3-phosphate and acetaldehyde from 2-deoxy-alpha-D-ribose 1-phosphate: step 1/2. Its function is as follows. Isomerase that catalyzes the conversion of deoxy-ribose 1-phosphate (dRib-1-P) and ribose 1-phosphate (Rib-1-P) to deoxy-ribose 5-phosphate (dRib-5-P) and ribose 5-phosphate (Rib-5-P), respectively. The sequence is that of Phosphopentomutase from Salmonella gallinarum (strain 287/91 / NCTC 13346).